The chain runs to 122 residues: Large ribosomal subunit protein uL14 (122 aa).

Belongs to the universal ribosomal protein uL14 family. Part of the 50S ribosomal subunit. Forms a cluster with proteins L3 and L19. In the 70S ribosome, L14 and L19 interact and together make contacts with the 16S rRNA in bridges B5 and B8.

Binds to 23S rRNA. Forms part of two intersubunit bridges in the 70S ribosome. The sequence is that of Large ribosomal subunit protein uL14 from Geobacillus thermodenitrificans (strain NG80-2).